A 1440-amino-acid chain; its full sequence is ABC transporter G family member 46 (1440 aa).

The segment at 1 to 42 (MDDDVDAGEIYAVDRQREEGSASAAAFSRSPSTGRVDDDDDD) is disordered. Low complexity predominate over residues 21–32 (SASAAAFSRSPS). The region spanning 137 to 419 (ANTLHMTTRS…FKSLGFKCLE (283 aa)) is the ABC transporter 1 domain. 170 to 177 (GSPGSGKT) is a binding site for ATP. An ABC transmembrane type-2 1 domain is found at 497–710 (KILKANIDRE…ALNALAVNEF (214 aa)). 7 helical membrane passes run 516–536 (LYIF…SVFI), 561–581 (AIMF…PVFF), 603–623 (TPIS…VIGF), 634–654 (FLVL…IAAL), 659–679 (VVAS…SGFI), 688–708 (WLIW…LAVN), and 745–765 (IGLG…TICL). Residues 794 to 829 (DQEPSSGGRVTNDKRYTEGGNNDEATSSNANHNSSP) form a disordered region. The span at 812 to 829 (GGNNDEATSSNANHNSSP) shows a compositional bias: polar residues. One can recognise an ABC transporter 2 domain in the interval 843–1095 (MTFEDIRYSI…ELIKYFESIE (253 aa)). An ATP-binding site is contributed by 888-895 (GISGAGKT). An ABC transmembrane type-2 2 domain is found at 1168-1382 (IQCLACLWKQ…TINGLVTSQF (215 aa)). 7 consecutive transmembrane segments (helical) span residues 1188–1208 (IAVN…MFWG), 1219–1236 (LLSA…LGVQ), 1271–1291 (VVVE…IVYS), 1302–1322 (FFWY…YGMM), 1332–1352 (MSSI…GFLI), 1357–1377 (IPIW…INGL), and 1410–1430 (LWVA…LFGF).

Belongs to the ABC transporter superfamily. ABCG family. PDR (TC 3.A.1.205) subfamily.

The protein localises to the membrane. May be a general defense protein. This Oryza sativa subsp. japonica (Rice) protein is ABC transporter G family member 46.